A 367-amino-acid chain; its full sequence is MASNATFEVEIYGNTTKFENSLRGVNTAMSGLRGEAKNLREALKLDPTNTDKMAQLQKNLQTQLGLSRDKATKLKEELSTVDKGTSAGQKKWLQLTRDLGTAETQANRLEGEIKQVEGAISSGSWDIDAKMDTKGVNSGIDGMKSRFSGLREIAVGVFRQIGSSAISAVGNGLRGWISDAMDTQTAMIALKNTMKFKGNGQDFDYVSKSMQKLARDTNANSEDTLKLSTTFIGLGDSAKTAVGKTEALVKANQAFGGTGENLKGVAQAYGQMSASGKVTAENINQLTDNNTALSASLKDTVMQMNPQLKQYGSFNEAVSNGAVSMDMLDKAMQKAADGSSGATKTIRDTWSGFNEDLSQALLPTLEA.

It belongs to the skunalikevirus tape measure protein family.

It localises to the virion. Functionally, tape measure protein. Serves as a base for tail tube protein polymerization and acts as a template for tail length determination. The protein is Tape measure protein of Lactococcus lactis (Lactococcus lactis bacteriophage F4-1).